We begin with the raw amino-acid sequence, 267 residues long: Hydroxyethylthiazole kinase (267 aa).

Met46 provides a ligand contact to substrate. 2 residues coordinate ATP: Arg122 and Ser168. Gly195 contacts substrate.

Belongs to the Thz kinase family. It depends on Mg(2+) as a cofactor.

It catalyses the reaction 5-(2-hydroxyethyl)-4-methylthiazole + ATP = 4-methyl-5-(2-phosphooxyethyl)-thiazole + ADP + H(+). It functions in the pathway cofactor biosynthesis; thiamine diphosphate biosynthesis; 4-methyl-5-(2-phosphoethyl)-thiazole from 5-(2-hydroxyethyl)-4-methylthiazole: step 1/1. In terms of biological role, catalyzes the phosphorylation of the hydroxyl group of 4-methyl-5-beta-hydroxyethylthiazole (THZ). The sequence is that of Hydroxyethylthiazole kinase from Nitratidesulfovibrio vulgaris (strain DP4) (Desulfovibrio vulgaris).